The following is an 85-amino-acid chain: Small ribosomal subunit protein uS17 (85 aa).

It belongs to the universal ribosomal protein uS17 family. As to quaternary structure, part of the 30S ribosomal subunit.

Functionally, one of the primary rRNA binding proteins, it binds specifically to the 5'-end of 16S ribosomal RNA. The protein is Small ribosomal subunit protein uS17 of Mycoplasmoides gallisepticum (strain R(low / passage 15 / clone 2)) (Mycoplasma gallisepticum).